A 560-amino-acid chain; its full sequence is DNA ligase B (560 aa).

The active-site N6-AMP-lysine intermediate is the Lys124.

This sequence belongs to the NAD-dependent DNA ligase family. LigB subfamily.

It carries out the reaction NAD(+) + (deoxyribonucleotide)n-3'-hydroxyl + 5'-phospho-(deoxyribonucleotide)m = (deoxyribonucleotide)n+m + AMP + beta-nicotinamide D-nucleotide.. Catalyzes the formation of phosphodiester linkages between 5'-phosphoryl and 3'-hydroxyl groups in double-stranded DNA using NAD as a coenzyme and as the energy source for the reaction. The protein is DNA ligase B of Shigella flexneri.